The chain runs to 116 residues: Sperm mitochondrial-associated cysteine-rich protein (116 aa).

7 repeat units span residues 6–13, 14–21, 30–37, 38–45, 46–53, 54–61, and 62–68. The 7 X 7 (OR 8) AA approximate repeats stretch occupies residues 6–68; that stretch reads KHSKCCPAKG…CQPKPPCCIQ (63 aa). The segment at 80–116 is disordered; the sequence is VSPLNMESEPNSPQTQDKGCQTQQQPHSPQNESRPSK. Residues 93–104 are compositionally biased toward low complexity; that stretch reads QTQDKGCQTQQQ. Polar residues predominate over residues 105–116; it reads PHSPQNESRPSK.

Testis. Is selectively expressed in the spermatids of seminiferous tubules.

The protein localises to the cytoplasm. It localises to the mitochondrion membrane. In terms of biological role, involved in sperm motility. Its absence is associated with genetic background dependent male infertility. Infertility may be due to reduced sperm motility in the female reproductive tract and inability to penetrate the oocyte zona pellucida. In Homo sapiens (Human), this protein is Sperm mitochondrial-associated cysteine-rich protein (SMCP).